Reading from the N-terminus, the 394-residue chain is ATP-dependent RNA helicase fal1 (394 aa).

The Q motif signature appears at 21–49; it reads SSFEEMNLKEDLLRGIYAYGYETPSAVQS. The Helicase ATP-binding domain occupies 52–222; sequence IIQICKGRDV…NKFTTNPVRI (171 aa). 65–72 serves as a coordination point for ATP; the sequence is AQSGTGKT. Phosphoserine is present on serine 67. The short motif at 170–173 is the DEAD box element; the sequence is DEAD. The region spanning 233 to 394 is the Helicase C-terminal domain; it reads GLKQYFIAVE…EMPMNIGDMV (162 aa).

This sequence belongs to the DEAD box helicase family. DDX48/FAL1 subfamily.

The protein resides in the nucleus. Its subcellular location is the nucleolus. It carries out the reaction ATP + H2O = ADP + phosphate + H(+). ATP-dependent RNA helicase involved in 40S ribosomal subunit biogenesis. Required for the processing and cleavage of 35S pre-rRNA at sites A0, A1, and A2, leading to mature 18S rRNA. The chain is ATP-dependent RNA helicase fal1 (tif412) from Schizosaccharomyces pombe (strain 972 / ATCC 24843) (Fission yeast).